The sequence spans 204 residues: MPKVGLFNKEGQQVGDIQLNEQVFGVEVNKYALHQVVVAQLANKRQGTQSAKTRSEVRGGGIKPWRQKGTGRARQGSIRAPQWIKGGVVFAPKPRDYRMSIPKSMRKVAMTSALTSKVADMVVLEDLTFEAPKTKEAVKMLNAFEAKKTLIITAEVNENVYKSARNIRGVTVMPVNNINVYDLLNCKTLMITKEAVNKIEEVYA.

The interval 44–76 is disordered; that stretch reads KRQGTQSAKTRSEVRGGGIKPWRQKGTGRARQG.

This sequence belongs to the universal ribosomal protein uL4 family. Part of the 50S ribosomal subunit.

Functionally, one of the primary rRNA binding proteins, this protein initially binds near the 5'-end of the 23S rRNA. It is important during the early stages of 50S assembly. It makes multiple contacts with different domains of the 23S rRNA in the assembled 50S subunit and ribosome. In terms of biological role, forms part of the polypeptide exit tunnel. The polypeptide is Large ribosomal subunit protein uL4 (Clostridium perfringens (strain 13 / Type A)).